We begin with the raw amino-acid sequence, 348 residues long: Putative transport protein HI_0338 (348 aa).

The next 9 helical transmembrane spans lie at 7–27 (LHRT…VKLA), 28–48 (AEIV…SPII), 60–80 (LAIT…VGLI), 139–159 (VLLN…VVIF), 196–216 (VIGY…GVFI), 223–243 (VQYA…PNIG), 245–265 (IIAA…GIGF), 267–287 (VAIG…PKMM), and 296–316 (LVVF…GMLL).

This sequence belongs to the autoinducer-2 exporter (AI-2E) (TC 2.A.86) family.

It localises to the cell membrane. The protein is Putative transport protein HI_0338 of Haemophilus influenzae (strain ATCC 51907 / DSM 11121 / KW20 / Rd).